The chain runs to 483 residues: UDP-N-acetylmuramyl-tripeptide synthetase (483 aa).

Position 43 (Ser43) interacts with UDP-N-acetyl-alpha-D-muramoyl-L-alanyl-D-glutamate. An ATP-binding site is contributed by 116–122 (GTKGKTT). UDP-N-acetyl-alpha-D-muramoyl-L-alanyl-D-glutamate contacts are provided by residues 160–161 (TT), Ser187, and Arg195. An N6-carboxylysine modification is found at Lys229.

Belongs to the MurCDEF family. MurE subfamily. Carboxylation is probably crucial for Mg(2+) binding and, consequently, for the gamma-phosphate positioning of ATP.

The protein localises to the cytoplasm. The protein operates within cell wall biogenesis; peptidoglycan biosynthesis. Catalyzes the addition of an amino acid to the nucleotide precursor UDP-N-acetylmuramoyl-L-alanyl-D-glutamate (UMAG) in the biosynthesis of bacterial cell-wall peptidoglycan. The chain is UDP-N-acetylmuramyl-tripeptide synthetase from Lactococcus lactis subsp. cremoris (strain MG1363).